A 215-amino-acid polypeptide reads, in one-letter code: UPF0502 protein YceH (215 aa).

The protein belongs to the UPF0502 family.

This Salmonella paratyphi B (strain ATCC BAA-1250 / SPB7) protein is UPF0502 protein YceH.